The sequence spans 295 residues: MAMQTVREGLFSAPQTSWWTAFGSQPLAPESLAGDSDSFAGVKVGSVGETGQRVDKQSNSATHLAFSLGDVKSPRLVPKPHGATFSMQSPCLELGFSQPPIYTKYPYGEQQYYGVVSAYGSQSRVMLPLNMETEDSTIYVNSKQYHGIIRRRQSRAKAAAVLDQKKLSSRCRKPYMHHSRHLHALRRPRGSGGRFLNTKSQNLENSGTNAKKGDGSMQIQSQPKPQQSNSQNSEVVHPENGTMNLSNGLNVSGSEVTSMNYFLSSPVHSLGGMVMPSKWIAAAAAMDNGCCNFKT.

Positions 139–165 (YVNSKQYHGIIRRRQSRAKAAAVLDQK) match the Subunit association domain (SAD) motif. The segment at residues 173–198 (KPYMHHSRHLHALRRPRGSGGRFLNT) is a DNA-binding region (NFYA/HAP2-type). Positions 178–189 (HSRHLHALRRPR) are enriched in basic residues. The disordered stretch occupies residues 178–244 (HSRHLHALRR…VVHPENGTMN (67 aa)). Polar residues predominate over residues 197 to 209 (NTKSQNLENSGTN). The span at 216-233 (SMQIQSQPKPQQSNSQNS) shows a compositional bias: low complexity.

This sequence belongs to the NFYA/HAP2 subunit family. In terms of assembly, heterotrimeric transcription factor composed of three components, NF-YA, NF-YB and NF-YC. NF-YB and NF-YC must interact and dimerize for NF-YA association and DNA binding. Component of a heat stress-inducible transcriptional complex with NF-YA and NF-YB subunits made, at least, of NFYA2, NFYB3 and DPB3-1 in cooperation with DREB2A. Ubiquitous. Expressed in seedlings, roots, petioles, hypocotyls, reproductive organ tissues and leaves.

It is found in the nucleus. Stimulates the transcription of various genes by recognizing and binding to a CCAAT motif in promoters. Promotes the expression of heat stress-inducible genes by contributing to the formation of a heat stress-specific transcriptional complex with NF-Y subunits (e.g. DPB3-1, NF-YA2 and NF-YB3) and DREB2A at the promoter of target genes, thus promoting heat tolerance. This chain is Nuclear transcription factor Y subunit A-2, found in Arabidopsis thaliana (Mouse-ear cress).